The chain runs to 359 residues: MKFGNFLLTYQPPQFSQTEVMKRLVKLGRISEECGFDTVWLLEHHFTEFGLLGNPYVAAAYLLGATKKLNVGTAAIVLPTAHPVRQLEDVNLLDQMSKGRFRFGICRGLYNKDFRVFGTDMNNSRALTECWYGLIKNGMTEGYMEADNEHIKFHKVKVNPTAYSKGGAPVYVVAESASTTEWAAQFGLPMILSWIINTNEKKAQLELYNEVAQEYGHDIHNIDHCLSYITSVNYDSNKAQEICRDFLGHWYDSYVNATTIFDDSDKTRGYDFNKGQWRDFVLKGHRDTNRRIDYSYEINPVGTPQECIDIIQKDIDATGISNICCGFEANGTVDEIIASMKLFQSDVMPFLKEKQRSLL.

The protein belongs to the bacterial luciferase oxidoreductase family. In terms of assembly, heterodimer of an alpha and a beta chain.

The catalysed reaction is a long-chain fatty aldehyde + FMNH2 + O2 = a long-chain fatty acid + hnu + FMN + H2O + 2 H(+). Light-emitting reaction in luminous bacteria. This is Alkanal monooxygenase alpha chain (luxA) from Photorhabdus laumondii subsp. laumondii (strain DSM 15139 / CIP 105565 / TT01) (Photorhabdus luminescens subsp. laumondii).